Here is a 523-residue protein sequence, read N- to C-terminus: Vanin-like protein 3 (523 aa).

A signal peptide spans 1 to 19; the sequence is MAVFLRRFLWLISFTLVLT. Positions 29–298 constitute a CN hydrolase domain; that stretch reads YIAGVVEYRP…RKLLLAKVPL (270 aa). N-linked (GlcNAc...) asparagine glycosylation occurs at N64. The active-site Proton acceptor is E74. Residue K167 is the Proton donor of the active site. Residues N177 and N192 are each glycosylated (N-linked (GlcNAc...) asparagine). The active-site Nucleophile is the C200. N-linked (GlcNAc...) asparagine glycosylation is found at N330 and N468. N498 carries GPI-anchor amidated asparagine lipidation. A propeptide spans 499–523 (removed in mature form); it reads GGAGRLGTLLFLLITPLIMMHLFRE.

It belongs to the carbon-nitrogen hydrolase superfamily. BTD/VNN family. Expressed in third instar larvae.

Its subcellular location is the cell membrane. The chain is Vanin-like protein 3 from Drosophila melanogaster (Fruit fly).